Here is a 73-residue protein sequence, read N- to C-terminus: Sec-independent protein translocase protein TatA (73 aa).

The chain crosses the membrane as a helical span at residues 1–21; it reads MGSFSIWHWLIVLVIVMLVFG. A disordered region spans residues 44-73; the sequence is KSAEDPNEQIPQSTTTAEKTVDVQAKDINK. The segment covering 52–61 has biased composition (polar residues); that stretch reads QIPQSTTTAE. Residues 62 to 73 are compositionally biased toward basic and acidic residues; sequence KTVDVQAKDINK.

Belongs to the TatA/E family. In terms of assembly, the Tat system comprises two distinct complexes: a TatABC complex, containing multiple copies of TatA, TatB and TatC subunits, and a separate TatA complex, containing only TatA subunits. Substrates initially bind to the TatABC complex, which probably triggers association of the separate TatA complex to form the active translocon.

The protein resides in the cell inner membrane. Its function is as follows. Part of the twin-arginine translocation (Tat) system that transports large folded proteins containing a characteristic twin-arginine motif in their signal peptide across membranes. TatA could form the protein-conducting channel of the Tat system. This Polynucleobacter asymbioticus (strain DSM 18221 / CIP 109841 / QLW-P1DMWA-1) (Polynucleobacter necessarius subsp. asymbioticus) protein is Sec-independent protein translocase protein TatA.